A 205-amino-acid chain; its full sequence is Guanylyl cyclase-activating protein 1 (205 aa).

A lipid anchor (N-myristoyl glycine) is attached at glycine 2. Asparagine 3 is modified (deamidated asparagine). 4 EF-hand domains span residues 30–48 (SGQL…KNLS), 50–85 (ASNQ…VLKG), 86–121 (KVEQ…IRAI), and 129–164 (TAEE…DELL). Ca(2+) contacts are provided by aspartate 63, asparagine 65, aspartate 67, tyrosine 69, glutamate 74, aspartate 99, aspartate 101, asparagine 103, cysteine 105, glutamate 110, aspartate 142, asparagine 144, aspartate 146, glutamate 148, and glutamate 153.

In terms of tissue distribution, retina.

Its function is as follows. Regulatory protein that inhibits guanylyl cyclase when free calcium ions concentration is elevated. This Ca(2+)-sensitive regulation of retinal guanylyl cyclase is a key event in recovery of the dark state of rod photoreceptors following light exposure. This Lithobates pipiens (Northern leopard frog) protein is Guanylyl cyclase-activating protein 1 (GUCA1A).